Reading from the N-terminus, the 545-residue chain is Methionine--tRNA ligase (545 aa).

The short motif at proline 12–histidine 22 is the 'HIGH' region element. 4 residues coordinate Zn(2+): cysteine 143, cysteine 146, cysteine 156, and cysteine 159. The short motif at lysine 329 to serine 333 is the 'KMSKS' region element. Lysine 332 provides a ligand contact to ATP.

It belongs to the class-I aminoacyl-tRNA synthetase family. MetG type 1 subfamily. Monomer. Zn(2+) serves as cofactor.

The protein resides in the cytoplasm. The enzyme catalyses tRNA(Met) + L-methionine + ATP = L-methionyl-tRNA(Met) + AMP + diphosphate. In terms of biological role, is required not only for elongation of protein synthesis but also for the initiation of all mRNA translation through initiator tRNA(fMet) aminoacylation. This Buchnera aphidicola subsp. Baizongia pistaciae (strain Bp) protein is Methionine--tRNA ligase (metG).